A 421-amino-acid polypeptide reads, in one-letter code: Calreticulin (421 aa).

Residues 1–22 (MAFRVPNSSLLSLILLSLLAIA) form the signal peptide. The N-linked (GlcNAc...) asparagine glycan is linked to asparagine 56. A disulfide bridge connects residues cysteine 110 and cysteine 142. Positions 114, 116, 133, and 140 each coordinate an alpha-D-glucoside. Asparagine 156 carries an N-linked (GlcNAc...) asparagine glycan. 7 repeat units span residues 196 to 207 (KQTGSLYSDWDL), 215 to 226 (DPEAKKPEDWED), 232 to 243 (DPEDKKPEGYDD), 250 to 261 (DPDAKKPEDWDD), 265 to 275 (GEWTAPTIPNP), 279 to 289 (GEWKPKKIKNP), and 293 to 303 (GKWKAPLIDNP). Positions 196-261 (KQTGSLYSDW…DAKKPEDWDD (66 aa)) are 4 X approximate repeats. Residues 217–283 (EAKKPEDWED…NPEYKGEWKP (67 aa)) form a disordered region. Residues 223 to 232 (DWEDQEYIPD) show a composition bias toward acidic residues. Over residues 233–257 (PEDKKPEGYDDIPKEITDPDAKKPE) the composition is skewed to basic and acidic residues. Residues 265-303 (GEWTAPTIPNPEYKGEWKPKKIKNPNFKGKWKAPLIDNP) form a 3 X approximate repeats region. Residue glutamate 323 coordinates an alpha-D-glucoside. Positions 350–380 (EETWGKQKDAEKAAFEELEKKLQEEESKEDP) are enriched in basic and acidic residues. Residues 350–421 (EETWGKQKDA…ETEAEKHDEL (72 aa)) are disordered. Positions 381–399 (VDSDAEDDDNEAEDGEESD) are enriched in acidic residues. Residues 418–421 (HDEL) carry the Prevents secretion from ER motif.

This sequence belongs to the calreticulin family.

The protein resides in the endoplasmic reticulum lumen. Functionally, molecular calcium-binding chaperone promoting folding, oligomeric assembly and quality control in the ER via the calreticulin/calnexin cycle. This lectin may interact transiently with almost all of the monoglucosylated glycoproteins that are synthesized in the ER. The sequence is that of Calreticulin from Prunus armeniaca (Apricot).